A 204-amino-acid chain; its full sequence is Inner membrane protein BB_0250 (204 aa).

5 consecutive transmembrane segments (helical) span residues 17–37 (IAYSPIVFFSLLILAGLNVPI), 58–78 (ILIFLGIFWGAYLGDIISFYI), 101–121 (YYYGQYGVLTLFIGRFIPFGV), 139–159 (FIVSDFFATLLSIVVYFTLSF), and 172–192 (IKIIIFAIFIAVIATTIIIYV).

It belongs to the DedA family.

It localises to the cell inner membrane. In terms of biological role, required for proper cell division and envelope integrity. In Borreliella burgdorferi (strain ATCC 35210 / DSM 4680 / CIP 102532 / B31) (Borrelia burgdorferi), this protein is Inner membrane protein BB_0250.